Here is a 555-residue protein sequence, read N- to C-terminus: Formate--tetrahydrofolate ligase (555 aa).

65–72 (TPAGEGKS) is an ATP binding site.

Belongs to the formate--tetrahydrofolate ligase family.

The enzyme catalyses (6S)-5,6,7,8-tetrahydrofolate + formate + ATP = (6R)-10-formyltetrahydrofolate + ADP + phosphate. Its pathway is one-carbon metabolism; tetrahydrofolate interconversion. This Staphylococcus aureus (strain bovine RF122 / ET3-1) protein is Formate--tetrahydrofolate ligase.